We begin with the raw amino-acid sequence, 181 residues long: Putative manganese efflux pump MntP (181 aa).

6 helical membrane passes run 5–25 (LIAL…IALG), 36–56 (MFKV…MGMV), 66–86 (GLFA…VMIV), 102–122 (IGLF…GLSL), 130–150 (ALAV…GLFI), and 158–178 (VGPY…VKLL).

The protein belongs to the MntP (TC 9.B.29) family.

It localises to the cell membrane. Functionally, probably functions as a manganese efflux pump. This Halalkalibacterium halodurans (strain ATCC BAA-125 / DSM 18197 / FERM 7344 / JCM 9153 / C-125) (Bacillus halodurans) protein is Putative manganese efflux pump MntP.